The primary structure comprises 515 residues: Sphingolipid 10-desaturase (515 aa).

Residues 3–23 (AVWALLWALQLGTLVGCALVL) traverse the membrane as a helical segment. Positions 46 to 113 (AKPISDQKAA…DISFVFRVMH (68 aa)) constitute a Cytochrome b5 heme-binding domain. The heme site is built by His90 and His113. A helical transmembrane segment spans residues 198 to 218 (TWLLWNTAVLISIIALSVISM). The Histidine box-1 motif lies at 245-249 (HDAEH). The helical transmembrane segment at 258–278 (LNDILGWIYGTVFLGVNGAWW) threads the bilayer. Positions 281–286 (EHREHH) match the Histidine box-2 motif. The next 3 membrane-spanning stretches (helical) occupy residues 322–342 (IIHF…FIVG), 359–379 (PWTI…LSQT), and 382–402 (PIPV…QLLG). The Histidine box-3 motif lies at 447–451 (HYSHH).

The protein belongs to the fatty acid desaturase type 1 family. Fe(2+) serves as cofactor.

The protein resides in the membrane. The enzyme catalyses a (4E,8E)-4-sphinga-4,8-dienine ceramide + 2 Fe(II)-[cytochrome b5] + O2 + 2 H(+) = an N-acyl-(4E,8E,10E)-sphingatrienine + 2 Fe(III)-[cytochrome b5] + 2 H2O. It participates in lipid metabolism; sphingolipid metabolism. Its function is as follows. Fatty acid desaturase that catalyzes the introduction of the third double bond at the Delta(10) position in d18:3Delta4,8,10 triunsaturated sphingolipid long fatty acid chains. The cytochrome b5 domain probably acts as the direct electron donor to the active site of the desaturase. The protein is Sphingolipid 10-desaturase of Thalassiosira pseudonana (Marine diatom).